A 173-amino-acid polypeptide reads, in one-letter code: MARVEL domain-containing protein 1 (173 aa).

N-acetylmethionine is present on methionine 1. Residues 1 to 29 (MLPPPPRQPPPQARAARGAVRLQRPFLRS) are Cytoplasmic-facing. In terms of domain architecture, MARVEL spans 26-166 (FLRSPLGVLR…SALYGCGRRC (141 aa)). A helical membrane pass occupies residues 30 to 50 (PLGVLRLLQLLAGAAFWITIA). Residues 51-59 (TSKYQGPVH) lie on the Extracellular side of the membrane. The helical transmembrane segment at 60-80 (FALFVSVLFWLLTLGLYFLTL) threads the bilayer. At 81–94 (LGKHELVPVLGSRW) the chain is on the cytoplasmic side. Residues 95–115 (LMVNVAHDVLAAALYGAATGI) traverse the membrane as a helical segment. Residues 116–138 (MSDQMQRHSYCNLKDYPLPCAYH) lie on the Extracellular side of the membrane. Residues 139–159 (AFLAAAVCGGVCHGLYLLSAL) form a helical membrane-spanning segment. Residues 160-173 (YGCGRRCQGKQEVA) are Cytoplasmic-facing.

As to expression, widely expressed in normal tissues. Down-regulated in multiple primary tumors.

The protein resides in the cell membrane. Its subcellular location is the cytoplasm. The protein localises to the cytoskeleton. It localises to the nucleus. Functionally, microtubule-associated protein that exhibits cell cycle-dependent localization and can inhibit cell proliferation and migration. The sequence is that of MARVEL domain-containing protein 1 (MARVELD1) from Homo sapiens (Human).